Consider the following 571-residue polypeptide: RNA polymerase sigma factor SigA (571 aa).

Positions 321–391 (MVESNLRLVI…TRAIADQART (71 aa)) are sigma-70 factor domain-2. The Interaction with polymerase core subunit RpoC motif lies at 345 to 348 (DLIQ). The tract at residues 400-476 (ETINKVLRGA…DTAVESPAEA (77 aa)) is sigma-70 factor domain-3. The tract at residues 489 to 542 (VLKTLTDRERFVLIHRFGLLDGRPKTLEEVGSAFNVTRERIRQIEAKALRKMRH) is sigma-70 factor domain-4. The H-T-H motif DNA-binding region spans 515-534 (LEEVGSAFNVTRERIRQIEA).

It belongs to the sigma-70 factor family. RpoD/SigA subfamily. As to quaternary structure, interacts transiently with the RNA polymerase catalytic core.

The protein localises to the cytoplasm. In terms of biological role, sigma factors are initiation factors that promote the attachment of RNA polymerase to specific initiation sites and are then released. This sigma factor is the primary sigma factor during exponential growth. The sequence is that of RNA polymerase sigma factor SigA from Chlamydia trachomatis serovar D (strain ATCC VR-885 / DSM 19411 / UW-3/Cx).